Consider the following 272-residue polypeptide: uncharacterized protein (272 aa).

This is an uncharacterized protein from Bacillus subtilis (strain 168).